A 338-amino-acid chain; its full sequence is MAIDVFYDDDADLSIIQGRKVAIIGYGSQGHAHAQNLRESGVEVVIGLREGSKSRAKAEEAGFTVKTNAEAAEWADVIMLLAPDTSQAKIFAEDIEPNLNDGDALFFGHGLNIHFKLIEPADNIIIGMVAPKGPGHLVRRQFVDGKGVPCLIAVEQDPKNNGRDLALSYAAAIGGARAGVIPTTFEAETVTDLFGEQAVLCGGTEELIKTGFEVLVEAGYEPEMAYFECLHEMKLIVDLMFEGGIANMNYSVSDTAEFGGYLSGPRVIDADTKKRMKDILTDIQDGTFTKRLVANVEGGNKELEELRASYNDHQIEKTGAKLRDLMSWVKVDARAETA.

Positions 3–183 (IDVFYDDDAD…GGARAGVIPT (181 aa)) constitute a KARI N-terminal Rossmann domain. Residues 26–29 (YGSQ), R49, S52, S54, and 84–87 (DTSQ) each bind NADP(+). H109 is an active-site residue. G135 contributes to the NADP(+) binding site. A KARI C-terminal knotted domain is found at 184–329 (TFEAETVTDL…AKLRDLMSWV (146 aa)). Mg(2+) contacts are provided by D192, E196, E228, and E232. S253 provides a ligand contact to substrate.

It belongs to the ketol-acid reductoisomerase family. It depends on Mg(2+) as a cofactor.

It carries out the reaction (2R)-2,3-dihydroxy-3-methylbutanoate + NADP(+) = (2S)-2-acetolactate + NADPH + H(+). The enzyme catalyses (2R,3R)-2,3-dihydroxy-3-methylpentanoate + NADP(+) = (S)-2-ethyl-2-hydroxy-3-oxobutanoate + NADPH + H(+). The protein operates within amino-acid biosynthesis; L-isoleucine biosynthesis; L-isoleucine from 2-oxobutanoate: step 2/4. Its pathway is amino-acid biosynthesis; L-valine biosynthesis; L-valine from pyruvate: step 2/4. In terms of biological role, involved in the biosynthesis of branched-chain amino acids (BCAA). Catalyzes an alkyl-migration followed by a ketol-acid reduction of (S)-2-acetolactate (S2AL) to yield (R)-2,3-dihydroxy-isovalerate. In the isomerase reaction, S2AL is rearranged via a Mg-dependent methyl migration to produce 3-hydroxy-3-methyl-2-ketobutyrate (HMKB). In the reductase reaction, this 2-ketoacid undergoes a metal-dependent reduction by NADPH to yield (R)-2,3-dihydroxy-isovalerate. In Corynebacterium jeikeium (strain K411), this protein is Ketol-acid reductoisomerase (NADP(+)).